Consider the following 654-residue polypeptide: Hemagglutinin-esterase-fusion glycoprotein (654 aa).

The signal sequence occupies residues 1–14 (MFFSLLLMLGLTEA). A fusion domain-1 region spans residues 15–40 (EKIKICLQKQVNSSFSLHNGFGGNLY). At 15–629 (EKIKICLQKQ…QSDPFYWGSS (615 aa)) the chain is on the extracellular side. Cystine bridges form between cysteine 20-cysteine 582, cysteine 209-cysteine 251, cysteine 228-cysteine 315, and cysteine 236-cysteine 288. Asparagine 26 and asparagine 61 each carry an N-linked (GlcNAc...) asparagine; by host glycan. Residues 41-157 (ATEEKRMFEL…KLNFQKSIYE (117 aa)) are esterase domain-1. Serine 71 acts as the Nucleophile in catalysis. Asparagine 143 and asparagine 188 each carry an N-linked (GlcNAc...) asparagine; by host glycan. The tract at residues 157–309 (ELASQSHCMS…VRSSPRFLLM (153 aa)) is N-acetyl-9-O-acetylneuraminic acid binding. The tract at residues 309–363 (MPERSYCFDMKEKGPVTAVQSIWGKGRKSDYAVDQACLSTPGCMLIQKQKPYIGE) is esterase domain-2. Residues 364-654 (ADDHHGDQEM…ISGIAICRTK (291 aa)) form a fusion domain-2 region. Active-site charge relay system residues include aspartate 365 and histidine 368. N-linked (GlcNAc...) asparagine; by host glycosylation is found at asparagine 394, asparagine 551, and asparagine 602. A helical transmembrane segment spans residues 630–650 (LGLAITAANLMAALVISGIAI). At 651–654 (CRTK) the chain is on the cytoplasmic side.

The protein belongs to the influenza viruses hemagglutinin family. As to quaternary structure, homotrimer of disulfide-linked HEF1-HEF2. In natural infection, inactive HEF is matured into HEF1 and HEF2 outside the cell by one or more trypsin-like, arginine-specific endoprotease.

It localises to the virion membrane. Its subcellular location is the host cell membrane. The enzyme catalyses N-acetyl-9-O-acetylneuraminate + H2O = N-acetylneuraminate + acetate + H(+). The catalysed reaction is N-acetyl-4-O-acetylneuraminate + H2O = N-acetylneuraminate + acetate + H(+). In terms of biological role, binds to the N-acetyl-9-O-acetylneuraminic acid residues on the cell surface, bringing about the attachment of the virus particle to the cell. Plays a major role in the determination of host range restriction and virulence. Class I viral fusion protein. Responsible for penetration of the virus into the cell cytoplasm by mediating the fusion of the membrane of the endocytosed virus particle with the endosomal membrane. Low pH in endosomes induce an irreversible conformational change in HEF2, releasing the fusion hydrophobic peptide. Several trimers are required to form a competent fusion pore. Displays a receptor-destroying activity which is a neuraminidate-O-acetyl esterase. This activity cleaves off any receptor on the cell surface, which would otherwise prevent virions release. These cleavages prevent self-aggregation and ensure the efficient spread of the progeny virus from cell to cell. This is Hemagglutinin-esterase-fusion glycoprotein from Influenza C virus (strain C/California/1978).